Here is a 93-residue protein sequence, read N- to C-terminus: Small ribosomal subunit protein bS20 (93 aa).

The protein belongs to the bacterial ribosomal protein bS20 family.

Its function is as follows. Binds directly to 16S ribosomal RNA. This is Small ribosomal subunit protein bS20 from Hydrogenobaculum sp. (strain Y04AAS1).